A 62-amino-acid chain; its full sequence is MRCLPVFVVLLLLIASAPSVDAQPKTKDDVPLAPLHDNIQNTLQTLRKKVCCRPMQDCCSGK.

The signal sequence occupies residues 1–22 (MRCLPVFVVLLLLIASAPSVDA). Positions 23–47 (QPKTKDDVPLAPLHDNIQNTLQTLR) are excised as a propeptide. A Methionine sulfoxide; partial modification is found at M55. The residue at position 60 (S60) is a Serine amide.

Belongs to the conotoxin T superfamily. Contains 2 disulfide bonds. Post-translationally, contains 2 disulfide bonds that can be either 'C1-C3, C2-C4' or 'C1-C4, C2-C3', since these disulfide connectivities have been observed for conotoxins with cysteine framework V (for examples, see AC P0DQQ7 and AC P81755).. Expressed by the venom duct. Is mostly present in part 5 of the venom duct (distal part near the pharynx), and less abundantly present in part 4 of the venom duct.

Its subcellular location is the secreted. The sequence is that of Conotoxin TeAr151 from Conus textile (Cloth-of-gold cone).